An 881-amino-acid chain; its full sequence is Putative cation exchanger C521.04c (881 aa).

The span at 1–19 shows a compositional bias: polar residues; sequence MSQPADINQSESSAETITQ. 2 disordered regions span residues 1 to 39 and 52 to 142; these read MSQPADINQSESSAETITQGRRADRPEETPSSSVYEQNL and ADAT…LRSE. Positions 63–77 are enriched in basic and acidic residues; that stretch reads NDRDIYSPREIDQYT. Positions 83–95 are enriched in polar residues; the sequence is RTDPSTSTISNAR. Residues 99–113 show a composition bias toward low complexity; sequence RNSVSRLSRSSSNVR. A Phosphoserine modification is found at serine 129. 8 helical membrane passes run 200 to 220, 329 to 349, 407 to 427, 438 to 458, 471 to 491, 504 to 524, 537 to 557, and 594 to 614; these read IWLICFGAPLFLVIFICYIFF, LIIAPTLLITSAICMFTIFFV, IYIIYFDMLALIIPTIFFGFF, VFLFTASLVSIIPLAYFIGMA, GAFINAFFGSVIEVFLYSVAL, IGSILAGLLLMPGLSMCAGAI, GATSTMLLFAVLGAFAPTMLF, and LPFTYCCSIMLVLAYAIGLWF. The interval 641 to 717 is disordered; the sequence is VGEPVNQDTA…SQNSHGDDAP (77 aa). A compositionally biased stretch (polar residues) spans 646–657; sequence NQDTAGNMSDSS. Positions 678–688 are enriched in low complexity; sequence SSGLSSNGSEN. 5 helical membrane passes run 726 to 746, 762 to 782, 794 to 814, 828 to 848, and 859 to 879; these read IILLSATFLYSLIAEILVEHV, LTLFALVPNTTEFMNAISFAL, SAYALQVCLLQIPCLMGYSLF, LFTMVFPTWDMICVMICVFLL, and YFKGSILVLAYLVSMLGFTFF.

This sequence belongs to the Ca(2+):cation antiporter (CaCA) (TC 2.A.19) family.

The protein localises to the endoplasmic reticulum membrane. In terms of biological role, putative cation exchanger. The sequence is that of Putative cation exchanger C521.04c from Schizosaccharomyces pombe (strain 972 / ATCC 24843) (Fission yeast).